The sequence spans 475 residues: Putative aldehyde dehydrogenase (475 aa).

Residues 146-147 (WN) and 223-224 (GS) contribute to the NAD(+) site. E245 serves as the catalytic Proton acceptor. L246 serves as a coordination point for NAD(+). The active-site Nucleophile is the C279. E379 contacts NAD(+).

The protein belongs to the aldehyde dehydrogenase family.

The enzyme catalyses an aldehyde + NAD(+) + H2O = a carboxylate + NADH + 2 H(+). The protein is Putative aldehyde dehydrogenase of Staphylococcus aureus (strain USA300).